The sequence spans 447 residues: Phosphoglucosamine mutase (447 aa).

Catalysis depends on S100, which acts as the Phosphoserine intermediate. Residues S100, D239, D241, and D243 each contribute to the Mg(2+) site. S100 is modified (phosphoserine).

This sequence belongs to the phosphohexose mutase family. Requires Mg(2+) as cofactor. Post-translationally, activated by phosphorylation.

The enzyme catalyses alpha-D-glucosamine 1-phosphate = D-glucosamine 6-phosphate. Catalyzes the conversion of glucosamine-6-phosphate to glucosamine-1-phosphate. The chain is Phosphoglucosamine mutase from Thermoanaerobacter pseudethanolicus (strain ATCC 33223 / 39E) (Clostridium thermohydrosulfuricum).